The chain runs to 178 residues: uncharacterized protein (178 aa).

Its function is as follows. This protein is non-essential for virus function. This is an uncharacterized protein from Sulfolobus spindle-shape virus 1 (SSV1).